Reading from the N-terminus, the 213-residue chain is Protein-L-isoaspartate O-methyltransferase (213 aa).

Residue Ser-61 is part of the active site.

Belongs to the methyltransferase superfamily. L-isoaspartyl/D-aspartyl protein methyltransferase family.

The protein localises to the cytoplasm. The catalysed reaction is [protein]-L-isoaspartate + S-adenosyl-L-methionine = [protein]-L-isoaspartate alpha-methyl ester + S-adenosyl-L-homocysteine. Catalyzes the methyl esterification of L-isoaspartyl residues in peptides and proteins that result from spontaneous decomposition of normal L-aspartyl and L-asparaginyl residues. It plays a role in the repair and/or degradation of damaged proteins. In Maricaulis maris (strain MCS10) (Caulobacter maris), this protein is Protein-L-isoaspartate O-methyltransferase.